Reading from the N-terminus, the 166-residue chain is Interleukin-3 (166 aa).

The first 26 residues, 1-26, serve as a signal peptide directing secretion; the sequence is MVLASSTTSIHTMLLLLLMLFHLGLQ. N-linked (GlcNAc...) asparagine glycosylation is present at N42. Cystine bridges form between C43-C106 and C105-C166. N112 carries an N-linked (GlcNAc...) asparagine; partial glycan. The segment at 145–166 is disordered; sequence LTSRPPQPASGSVSPNRGTVEC.

This sequence belongs to the IL-3 family. Monomer. In terms of tissue distribution, activated T-cells, mast cells, natural killer cells.

Its subcellular location is the secreted. Cytokine secreted predominantly by activated T-lymphocytes as well as mast cells and osteoblastic cells that controls the production and differentiation of hematopoietic progenitor cells into lineage-restricted cells. Also stimulates mature basophils, eosinophils, and monocytes to become functionally activated. In addition, plays an important role in neural cell proliferation and survival. Participates as well in bone homeostasis and inhibits osteoclast differentiation by preventing NF-kappa-B nuclear translocation and activation. Mechanistically, exerts its biological effects through a receptor composed of IL3RA subunit and a signal transducing subunit IL3RB. Receptor stimulation results in the rapid activation of JAK2 kinase activity leading to STAT5-mediated transcriptional program. Alternatively, contributes to cell survival under oxidative stress in non-hematopoietic systems by activating pathways mediated by PI3K/AKT and ERK. The polypeptide is Interleukin-3 (Il3) (Mus musculus (Mouse)).